The sequence spans 259 residues: Ferritin-2, chloroplastic (259 aa).

The N-terminal 52 residues, 1-52 (MLLKLAPAFTLLNSHGENLSPMLSTSSQGFVLKNFSTKSRNGLLVVCASKGS), are a transit peptide targeting the chloroplast. Positions 53-85 (NTKPLTGVVFEPFEEVKKELMLVPTVPQVSLAR) are extension peptide (EP). Residues 86–239 (HKYSDQCEAA…EYVAQLRRVG (154 aa)) enclose the Ferritin-like diiron domain. Fe cation-binding residues include Glu103, Glu138, His141, and Gln221.

The protein belongs to the ferritin family. In terms of assembly, oligomer of 24 subunits. There are two types of subunits: L (light) chain and H (heavy) chain. The major chain can be light or heavy, depending on the species and tissue type. The functional molecule forms a roughly spherical shell with a diameter of 12 nm and contains a central cavity into which the insoluble mineral iron core is deposited.

Its subcellular location is the plastid. The protein localises to the chloroplast. The catalysed reaction is 4 Fe(2+) + O2 + 4 H(+) = 4 Fe(3+) + 2 H2O. Functionally, stores iron in a soluble, non-toxic, readily available form. Important for iron homeostasis. Has ferroxidase activity. Iron is taken up in the ferrous form and deposited as ferric hydroxides after oxidation. In Nicotiana tabacum (Common tobacco), this protein is Ferritin-2, chloroplastic (FER2).